The chain runs to 134 residues: Replication enhancer protein (134 aa).

This sequence belongs to the geminiviridae replication enhancer protein family. Homooligomer. Interacts with the replication-associated protein (REP). Interacts with host proliferating cell nuclear antigen (PCNA). Interacts with host retinoblastoma-related protein 1 (RBR1), and may thereby deregulate the host cell cycle. Oligomerization and interaction with PCNA are necessary for optimal replication enhancement.

In terms of biological role, increases viral DNA accumulation. Enhances infectivity and symptom expression. This African cassava mosaic virus (isolate West Kenyan 844) (ACMV) protein is Replication enhancer protein.